Here is a 150-residue protein sequence, read N- to C-terminus: Large ribosomal subunit protein bL9 (150 aa).

Belongs to the bacterial ribosomal protein bL9 family.

Its function is as follows. Binds to the 23S rRNA. This Cupriavidus taiwanensis (strain DSM 17343 / BCRC 17206 / CCUG 44338 / CIP 107171 / LMG 19424 / R1) (Ralstonia taiwanensis (strain LMG 19424)) protein is Large ribosomal subunit protein bL9.